A 318-amino-acid polypeptide reads, in one-letter code: MGNGVKEGPVRLHEDAEAVLSSSVSSKRDHRQVLSSLLSGALAGALAKTAVAPLDRTKIIFQVSSKRFSAKEAFRVLYYTYLNEGFLSLWRGNSATMVRVVPYAAIQFSAHEEYKRILGSYYGFRGEALPPWPRLFAGALAGTTAASLTYPLDLVRARMAVTPKEMYSNIFHVFIRISREEGLKTLYHGFMPTVLGVIPYAGLSFFTYETLKSLHREYSGRRQPYPFERMIFGACAGLIGQSASYPLDVVRRRMQTAGVTGYPRASIARTLRTIVREEGAVRGLYKGLSMNWVKGPIAVGISFTTFDLMQILLRHLQS.

Solcar repeat units lie at residues 31–117 (RQVL…YKRI), 129–214 (LPPW…LKSL), and 224–312 (PYPF…MQIL). Helical transmembrane passes span 33–53 (VLSSLLSGALAGALAKTAVAP), 89–109 (LWRGNSATMVRVVPYAAIQFS), 135–155 (LFAGALAGTTAASLTYPLDLV), 186–206 (LYHGFMPTVLGVIPYAGLSFF), 230–250 (MIFGACAGLIGQSASYPLDVV), and 293–313 (VKGPIAVGISFTTFDLMQILL).

It belongs to the mitochondrial carrier (TC 2.A.29) family.

The protein resides in the mitochondrion inner membrane. It carries out the reaction ADP(out) + CoA(in) = ADP(in) + CoA(out). The catalysed reaction is 3'-dephospho-CoA(in) + ADP(out) = 3'-dephospho-CoA(out) + ADP(in). It catalyses the reaction adenosine 3',5'-bisphosphate(in) + ADP(out) = adenosine 3',5'-bisphosphate(out) + ADP(in). The enzyme catalyses AMP(in) + ADP(out) = AMP(out) + ADP(in). It carries out the reaction dADP(in) + ADP(out) = dADP(out) + ADP(in). The catalysed reaction is ADP(in) + ATP(out) = ADP(out) + ATP(in). Functionally, mitochondrial carrier mediating the transport of coenzyme A (CoA) in mitochondria in exchange for intramitochondrial (deoxy)adenine nucleotides and adenosine 3',5'-diphosphate. This is Mitochondrial coenzyme A transporter SLC25A42 (SLC25A42) from Homo sapiens (Human).